Reading from the N-terminus, the 258-residue chain is Ribonuclease PH (258 aa).

Residues Arg86 and 124–126 contribute to the phosphate site; that span reads GTR.

It belongs to the RNase PH family. As to quaternary structure, homohexameric ring arranged as a trimer of dimers.

It catalyses the reaction tRNA(n+1) + phosphate = tRNA(n) + a ribonucleoside 5'-diphosphate. Functionally, phosphorolytic 3'-5' exoribonuclease that plays an important role in tRNA 3'-end maturation. Removes nucleotide residues following the 3'-CCA terminus of tRNAs; can also add nucleotides to the ends of RNA molecules by using nucleoside diphosphates as substrates, but this may not be physiologically important. Probably plays a role in initiation of 16S rRNA degradation (leading to ribosome degradation) during starvation. The protein is Ribonuclease PH of Caldicellulosiruptor saccharolyticus (strain ATCC 43494 / DSM 8903 / Tp8T 6331).